A 203-amino-acid polypeptide reads, in one-letter code: Acireductone dioxygenase 3 (203 aa).

Residues His96, His98, Glu102, and His141 each contribute to the Fe(2+) site. Ni(2+)-binding residues include His96, His98, Glu102, and His141.

It belongs to the acireductone dioxygenase (ARD) family. The cofactor is Fe(2+). Ni(2+) is required as a cofactor.

Its subcellular location is the cytoplasm. It localises to the nucleus. The enzyme catalyses 1,2-dihydroxy-5-(methylsulfanyl)pent-1-en-3-one + O2 = 4-methylsulfanyl-2-oxobutanoate + formate + 2 H(+). The catalysed reaction is 1,2-dihydroxy-5-(methylsulfanyl)pent-1-en-3-one + O2 = 3-(methylsulfanyl)propanoate + CO + formate + 2 H(+). Its pathway is amino-acid biosynthesis; L-methionine biosynthesis via salvage pathway; L-methionine from S-methyl-5-thio-alpha-D-ribose 1-phosphate: step 5/6. Its function is as follows. Catalyzes 2 different reactions between oxygen and the acireductone 1,2-dihydroxy-3-keto-5-methylthiopentene (DHK-MTPene) depending upon the metal bound in the active site. Fe-containing acireductone dioxygenase (Fe-ARD) produces formate and 2-keto-4-methylthiobutyrate (KMTB), the alpha-ketoacid precursor of methionine in the methionine recycle pathway. Ni-containing acireductone dioxygenase (Ni-ARD) produces methylthiopropionate, carbon monoxide and formate, and does not lie on the methionine recycle pathway. This is Acireductone dioxygenase 3 from Physcomitrium patens (Spreading-leaved earth moss).